Here is a 147-residue protein sequence, read N- to C-terminus: PTPN13-like protein, Y-linked (147 aa).

In terms of tissue distribution, expressed in testis. Detected in spermatocytes, spermatids and spermatozoa (at protein level).

In Homo sapiens (Human), this protein is PTPN13-like protein, Y-linked (PRY).